The primary structure comprises 319 residues: Ankyrin repeat domain-containing protein 1 (319 aa).

The stretch at 61-89 (KSEKQREAELKKKKLEQRSKLENLEDLEI) forms a coiled coil. 5 ANK repeats span residues 152–181 (YKRT…QIEF), 185–214 (LEST…KISA), 218–247 (LLST…DLNA), 251–280 (EGDT…DLNI), and 284–315 (AGKT…KTSR).

In terms of assembly, interacts with YBX1. Interacts with TTN/titin. As to expression, mainly expressed in activated vascular endothelial cells. To a lower extent, also expressed in hepatoma cells.

The protein resides in the nucleus. Functionally, may play an important role in endothelial cell activation. May act as a nuclear transcription factor that negatively regulates the expression of cardiac genes. Induction seems to be correlated with apoptotic cell death in hepatoma cells. The chain is Ankyrin repeat domain-containing protein 1 (ANKRD1) from Homo sapiens (Human).